The following is a 214-amino-acid chain: Putative ankyrin repeat protein RF_1081 (214 aa).

The span at 1-14 (MRKQQIPTLSTSAL) shows a compositional bias: polar residues. A disordered region spans residues 1-32 (MRKQQIPTLSTSALDKSPGPGSPDSDIEMKST). Residues 67 to 135 (NPNALLHEAA…EEPILVTKKD (69 aa)) form an ANK repeat.

This chain is Putative ankyrin repeat protein RF_1081, found in Rickettsia felis (strain ATCC VR-1525 / URRWXCal2) (Rickettsia azadi).